We begin with the raw amino-acid sequence, 409 residues long: Cuticle-degrading serine protease (409 aa).

The signal sequence occupies residues 1–21 (MLTNGLISLLAIAGLATNAFA). A propeptide spanning residues 22–123 (GPIRKVSNAG…VEQDTVVTTY (102 aa)) is cleaved from the precursor. One can recognise an Inhibitor I9 domain in the interval 39 to 122 (KYIVVLKKGL…YVEQDTVVTT (84 aa)). A Peptidase S8 domain is found at 130–409 (TWGLDRISHE…PNKIAYNGYA (280 aa)). D164 acts as the Charge relay system in catalysis. An N-linked (GlcNAc...) asparagine glycan is attached at N178. The active-site Charge relay system is the H200. N252 carries an N-linked (GlcNAc...) asparagine glycan. Catalysis depends on S353, which acts as the Charge relay system.

Belongs to the peptidase S8 family.

Its subcellular location is the secreted. Inhibited by PMSF, SSI, the peptide Phe-Val and by Phe, but not by EDTA. Hydrolyzes gelatin, casein, the chromogenic substrate azocoll and the cuticle of the nematode P.redivivus. Immobilizes P.redivivus. This Arthrobotrys oligospora (strain ATCC 24927 / CBS 115.81 / DSM 1491) (Nematode-trapping fungus) protein is Cuticle-degrading serine protease.